Consider the following 212-residue polypeptide: Superoxide dismutase [Fe] 1, chloroplastic (212 aa).

At alanine 2 the chain carries N-acetylalanine. Fe cation is bound by residues histidine 35, histidine 87, aspartate 169, and histidine 173.

It belongs to the iron/manganese superoxide dismutase family. In terms of assembly, homodimer. Interacts with cpn20/cpn21. Fe cation is required as a cofactor.

Its subcellular location is the cell membrane. The protein resides in the plastid. The protein localises to the chloroplast membrane. It is found in the chloroplast stroma. It carries out the reaction 2 superoxide + 2 H(+) = H2O2 + O2. Activated by cpn20/cpn21. Functionally, destroys superoxide anion radicals which are normally produced within the cells and which are toxic to biological systems. This chain is Superoxide dismutase [Fe] 1, chloroplastic (FSD1), found in Arabidopsis thaliana (Mouse-ear cress).